We begin with the raw amino-acid sequence, 378 residues long: Enoyl-[acyl-carrier-protein] reductase 1, mitochondrial (378 aa).

Tyr59 (proton donor) is an active-site residue. Residues Asn151, 180 to 183, 203 to 206, 284 to 287, 309 to 311, and Lys372 each bind NADP(+); these read NSQV, RDGK, YGGM, and YWL.

Belongs to the zinc-containing alcohol dehydrogenase family. Quinone oxidoreductase subfamily. As to quaternary structure, homodimer.

The protein localises to the mitochondrion matrix. The enzyme catalyses a 2,3-saturated acyl-[ACP] + NADP(+) = a (2E)-enoyl-[ACP] + NADPH + H(+). Catalyzes the NADPH-dependent reduction of trans-2-enoyl thioesters in mitochondrial fatty acid synthesis (fatty acid synthesis type II). Fatty acid chain elongation in mitochondria uses acyl carrier protein (ACP) as an acyl group carrier, but the enzyme accepts both ACP and CoA thioesters as substrates in vitro. Required for respiration and the maintenance of the mitochondrial compartment. This chain is Enoyl-[acyl-carrier-protein] reductase 1, mitochondrial (ETR1), found in Debaryomyces hansenii (strain ATCC 36239 / CBS 767 / BCRC 21394 / JCM 1990 / NBRC 0083 / IGC 2968) (Yeast).